The following is a 78-amino-acid chain: Putative membrane protein insertion efficiency factor (78 aa).

The protein belongs to the UPF0161 family.

The protein resides in the cell membrane. Could be involved in insertion of integral membrane proteins into the membrane. The polypeptide is Putative membrane protein insertion efficiency factor (Bacillus cereus (strain G9842)).